The sequence spans 306 residues: Reticulocalbin-2 (306 aa).

Positions 1 to 22 (MESPTLLGLLLLLLGGPGTSLG) are cleaved as a signal peptide. EF-hand domains lie at 50-85 (EQQKRLKVIISRIDVDLDGFLTEAELSSWIQHSFKS), 86-121 (YIIEDAKQQFQHYDKDGDGRVSWEEYNIQMYDRVID), 144-173 (KKRFQKANKDGDSHLDFEEFAAFEHPEEAD), 175-210 (MKEFVIQESLEEHDKDGDGFVSLQEFLGDYRRDPAA), 226-251 (NDYDKDKDGKLSPKELLTWVMPNNEG), and 252-287 (LAQEEAVHLLDEMDLDGDRRLSANEILENQDLFLNS). The Ca(2+) site is built by Asp-99, Asp-101, Asp-103, Arg-105, and Glu-110. Residues Asp-188, Asp-190, Asp-192, Glu-199, Asp-229, Asp-231, Asp-233, Lys-235, Glu-240, Asp-265, Asp-267, Asp-269, Arg-271, and Glu-276 each contribute to the Ca(2+) site.

It belongs to the CREC family. In terms of assembly, may bind phospholipase A2, since the rat reticulocalbin-2 has been isolated on the phospholipase complex taipoxin columns. Expressed by the venom gland.

The protein resides in the secreted. The polypeptide is Reticulocalbin-2 (Crotalus adamanteus (Eastern diamondback rattlesnake)).